The following is a 637-amino-acid chain: Chaperone protein HtpG (637 aa).

Residues 1 to 335 form an a; substrate-binding region; that stretch reads MQGTVNSERL…SSDLPLNISR (335 aa). Residues 336 to 559 are b; sequence ETLQNNKIIE…DGSMDIRMER (224 aa). Positions 560-637 are c; it reads FLREQKQLNY…RMNNVLSQIN (78 aa).

Belongs to the heat shock protein 90 family. In terms of assembly, homodimer.

It localises to the cytoplasm. In terms of biological role, molecular chaperone. Has ATPase activity. The polypeptide is Chaperone protein HtpG (Ehrlichia ruminantium (strain Welgevonden)).